Reading from the N-terminus, the 119-residue chain is Holo-[acyl-carrier-protein] synthase (119 aa).

Positions 8 and 58 each coordinate Mg(2+).

It belongs to the P-Pant transferase superfamily. AcpS family. The cofactor is Mg(2+).

The protein localises to the cytoplasm. The enzyme catalyses apo-[ACP] + CoA = holo-[ACP] + adenosine 3',5'-bisphosphate + H(+). Transfers the 4'-phosphopantetheine moiety from coenzyme A to a Ser of acyl-carrier-protein. The polypeptide is Holo-[acyl-carrier-protein] synthase (Bacillus cereus (strain ATCC 10987 / NRS 248)).